Reading from the N-terminus, the 117-residue chain is UPF0251 protein cbdbA217 (117 aa).

It belongs to the UPF0251 family.

The polypeptide is UPF0251 protein cbdbA217 (Dehalococcoides mccartyi (strain CBDB1)).